We begin with the raw amino-acid sequence, 524 residues long: Acetyl-CoA hydrolase (524 aa).

279–283 is a binding site for CoA; sequence GIGNI. Glu-304 acts as the 5-glutamyl coenzyme A thioester intermediate in catalysis. A CoA-binding site is contributed by Gly-398.

This sequence belongs to the acetyl-CoA hydrolase/transferase family.

It localises to the cytoplasm. The catalysed reaction is acetyl-CoA + H2O = acetate + CoA + H(+). Functionally, presumably involved in regulating the intracellular acetyl-CoA pool for fatty acid and cholesterol synthesis and fatty acid oxidation. The protein is Acetyl-CoA hydrolase (ACH1) of Yarrowia lipolytica (strain CLIB 122 / E 150) (Yeast).